The primary structure comprises 209 residues: Guanylate kinase (209 aa).

The 180-residue stretch at 5–184 (GLLIVFSGPS…AAERVKRVIE (180 aa)) folds into the Guanylate kinase-like domain. Residue 12-19 (GPSGVGKG) participates in ATP binding.

The protein belongs to the guanylate kinase family.

The protein resides in the cytoplasm. The enzyme catalyses GMP + ATP = GDP + ADP. Functionally, essential for recycling GMP and indirectly, cGMP. This chain is Guanylate kinase, found in Streptococcus agalactiae serotype Ia (strain ATCC 27591 / A909 / CDC SS700).